Here is a 356-residue protein sequence, read N- to C-terminus: Methionine import ATP-binding protein MetN 1 (356 aa).

The region spanning 15 to 254 (IQIRALNKTY…PVQPITQELL (240 aa)) is the ABC transporter domain. Position 51-58 (51-58 (GKSGAGKS)) interacts with ATP.

The protein belongs to the ABC transporter superfamily. Methionine importer (TC 3.A.1.24) family. As to quaternary structure, the complex is composed of two ATP-binding proteins (MetN), two transmembrane proteins (MetI) and a solute-binding protein (MetQ).

It is found in the cell inner membrane. The catalysed reaction is L-methionine(out) + ATP + H2O = L-methionine(in) + ADP + phosphate + H(+). It catalyses the reaction D-methionine(out) + ATP + H2O = D-methionine(in) + ADP + phosphate + H(+). Part of the ABC transporter complex MetNIQ involved in methionine import. Responsible for energy coupling to the transport system. The sequence is that of Methionine import ATP-binding protein MetN 1 from Acinetobacter baylyi (strain ATCC 33305 / BD413 / ADP1).